We begin with the raw amino-acid sequence, 103 residues long: Putative membrane protein insertion efficiency factor (103 aa).

Belongs to the UPF0161 family.

The protein resides in the cell inner membrane. Its function is as follows. Could be involved in insertion of integral membrane proteins into the membrane. The sequence is that of Putative membrane protein insertion efficiency factor from Chlamydia pneumoniae (Chlamydophila pneumoniae).